The sequence spans 258 residues: Short-chain dehydrogenase/reductase FrzI (258 aa).

NADP(+) contacts are provided by Ile21, Asn41, and Asn94. Residues Ser143 and Ser144 each act as proton donor in the active site. NADP(+)-binding residues include Tyr157, Lys161, Val191, and Thr193. Tyr157 acts as the Proton acceptor in catalysis. The Lowers pKa of active site Tyr role is filled by Lys161.

Belongs to the short-chain dehydrogenases/reductases (SDR) family.

The catalysed reaction is (1S,3S,6S,7S,8R)-7-hydroxy-6-[(4-methoxyphenyl)methyl]-3-(methylamino)-5-azatricyclo[6.3.1.0(1,5)]dodecan-9-one + NADPH + H(+) = (1S,3S,6S,7S,8S,9S)-6-[(4-methoxyphenyl)methyl]-3-(methylamino)-5-azatricyclo[6.3.1.0(1,5)]dodecane-7,9-diol + NADP(+). The protein operates within secondary metabolite biosynthesis. In terms of biological role, short-chain dehydrogenase/reductase; part of the gene cluster that mediates the biosynthesis of the alkaloid (-)-FR901483, a potent immunosuppressant that shows efficacy in animal models and a probable inhibitor of purine nucleotide biosynthesis by targeting phosphoribosylpyrophosphate amidotransferase (PPAT). Within the pathway, FrzI catalyzes the formation of dephospho-(-)-FR901483 from the aza-tricyclic intermediate produced by FrzH. The biosynthesis of (-)-FR901483 starts with the condensation of two L-tyrosines to yield (S,S)-dityrosyl-piperazine. This process occurs in 3 steps with the non-canonical nonribosomal peptide synthetase FrzA catalyzing the reduction of L-tyrosine into L-tyrosinal, the spontaneous condensation of 2 L-tyrosinal units, and the subsequent reduction by the NmrA-like family domain-containing oxidoreductase FrzB. The cytochrome P450 monooxygenase FrzC then performs coupling between N10 and C1' to morph the piperazine into a 1,4-diazabicyclo[3.2.1]octane spiro-fused to a 2,5-cyclohexadienone. The dienone portion is further reduced to cyclohexanone by the flavin-dependent reductase FrzD. The methyltranserases (MTs) FrzE and FrzF are then involved in the methylation at the C10' amine and the C4 phenolic oxygen, respectively. The order of the two MTs appear to be interchangeable. Cleavage of the C9-N10' bond by the dioxygenase FrzG then leads to formation of a conjugated iminium. In addition to the oxidation of C9, an additional dehydrogenation between C7 and C8 can occur to give a likely shunt product. The next biosynthetic step is the intramolecular aldol condensation catalyzed by the newly identified aldolase FrzH to yield an aza-tricyclic product with the formation of a C9-C3' bond. The short-chain dehydrogenase/reductase FrzI then produces dephospho-(-)-FR901483 that is phosphorylated at C4'-OH into (-)-FR901483 by the phosphotransferase FrzJ. This Cladobotryum sp protein is Short-chain dehydrogenase/reductase FrzI.